Consider the following 556-residue polypeptide: 2-succinyl-5-enolpyruvyl-6-hydroxy-3-cyclohexene-1-carboxylate synthase (556 aa).

This sequence belongs to the TPP enzyme family. MenD subfamily. Homodimer. Requires Mg(2+) as cofactor. It depends on Mn(2+) as a cofactor. The cofactor is thiamine diphosphate.

The catalysed reaction is isochorismate + 2-oxoglutarate + H(+) = 5-enolpyruvoyl-6-hydroxy-2-succinyl-cyclohex-3-ene-1-carboxylate + CO2. The protein operates within quinol/quinone metabolism; 1,4-dihydroxy-2-naphthoate biosynthesis; 1,4-dihydroxy-2-naphthoate from chorismate: step 2/7. It participates in quinol/quinone metabolism; menaquinone biosynthesis. Catalyzes the thiamine diphosphate-dependent decarboxylation of 2-oxoglutarate and the subsequent addition of the resulting succinic semialdehyde-thiamine pyrophosphate anion to isochorismate to yield 2-succinyl-5-enolpyruvyl-6-hydroxy-3-cyclohexene-1-carboxylate (SEPHCHC). In Shigella boydii serotype 18 (strain CDC 3083-94 / BS512), this protein is 2-succinyl-5-enolpyruvyl-6-hydroxy-3-cyclohexene-1-carboxylate synthase.